Reading from the N-terminus, the 208-residue chain is Proheparin-binding EGF-like growth factor (208 aa).

The N-terminal stretch at Met-1–Gly-23 is a signal peptide. Positions Glu-24–Leu-62 are excised as a propeptide. Topologically, residues Glu-24–Thr-161 are extracellular. Over residues Thr-37–Gln-49 the composition is skewed to polar residues. Disordered stretches follow at residues Thr-37–Arg-57 and Gln-81–Lys-104. A glycan (O-linked (GalNAc...) threonine) is linked at Thr-85. Positions Lys-93–Gly-102 are enriched in basic residues. The region spanning Lys-104 to His-144 is the EGF-like domain. Intrachain disulfides connect Cys-108–Cys-121, Cys-116–Cys-132, and Cys-134–Cys-143. A propeptide spans Pro-149–His-208 (C-terminal). The helical transmembrane segment at Ile-162 to Leu-182 threads the bilayer. Topologically, residues Met-183–His-208 are cytoplasmic.

In terms of assembly, interacts with FBLN1. Interacts with EGFR and ERBB4. Post-translationally, O-glycosylated. Macrophages, midbrain, cerebellum, hypothalamus, cerebral cortex, bulbourethral gland, lung, heart ventricle, kidney, skin, prostate, seminal vesicle, testis; at low levels in lymph node, thymus, spleen; not detected in pituitary, olfactory bulb, thyroid, duodenum, pancreas, liver, submaxillary gland.

The protein localises to the secreted. It is found in the extracellular space. Its subcellular location is the cell membrane. Its function is as follows. Growth factor that mediates its effects via EGFR, ERBB2 and ERBB4. Required for normal cardiac valve formation and normal heart function. Promotes smooth muscle cell proliferation. May be involved in macrophage-mediated cellular proliferation. It is mitogenic for fibroblasts, but not endothelial cells. It is able to bind EGF receptor/EGFR with higher affinity than EGF itself and is a far more potent mitogen for smooth muscle cells than EGF. Also acts as a diphtheria toxin receptor. The polypeptide is Proheparin-binding EGF-like growth factor (HBEGF) (Sus scrofa (Pig)).